The sequence spans 351 residues: Prostaglandin reductase 2 (351 aa).

99–100 is a binding site for substrate; the sequence is FY. NADP(+)-binding positions include 165 to 168, lysine 192, tyrosine 208, asparagine 231, 253 to 259, 287 to 289, and asparagine 337; these read GACG, CGQISQY, and FLV. 288–290 lines the substrate pocket; the sequence is LVL.

Belongs to the NADP-dependent oxidoreductase L4BD family. As to quaternary structure, monomer.

It is found in the cytoplasm. It catalyses the reaction 13,14-dihydro-15-oxo-prostaglandin E2 + NAD(+) = 15-oxoprostaglandin E2 + NADH + H(+). It carries out the reaction 13,14-dihydro-15-oxo-prostaglandin E2 + NADP(+) = 15-oxoprostaglandin E2 + NADPH + H(+). The enzyme catalyses 13,14-dihydro-15-oxo-PGF2alpha + NADP(+) = 15-oxoprostaglandin F2alpha + NADPH + H(+). The catalysed reaction is 13,14-dihydro-15-oxo-prostaglandin E1 + NADP(+) = 15-oxoprostaglandin E1 + NADPH + H(+). It catalyses the reaction 13,14-dihydro-15-oxo-prostaglandin F1alpha + NADP(+) = 15-oxoprostaglandin F1alpha + NADPH + H(+). Its function is as follows. Functions as 15-oxo-prostaglandin 13-reductase and acts on 15-keto-PGE1, 15-keto-PGE2, 15-keto-PGE1-alpha and 15-keto-PGE2-alpha with highest activity towards 15-keto-PGE2. Overexpression represses transcriptional activity of PPARG and inhibits adipocyte differentiation. This is Prostaglandin reductase 2 (PTGR2) from Bos taurus (Bovine).